We begin with the raw amino-acid sequence, 371 residues long: Putative RNA-binding protein Luc7-like 1 (371 aa).

2 coiled-coil regions span residues 87–177 (MDHL…RNSM) and 218–259 (FIQI…LSRR). A compositionally biased stretch (basic and acidic residues) spans 232–257 (VAEKQEKRNQDRLRRREEREREERLS). Residues 232 to 371 (VAEKQEKRNQ…RSEEKEAGEI (140 aa)) are disordered. Positions 258-317 (RRSGSRTRDRRRSRSRDRRRRRSRSTSRERRKLSRSRSRDRHRRHRSRSRSHSRGHRRAS) are enriched in basic residues. Composition is skewed to basic and acidic residues over residues 318–351 (RDRSAKYKFSRERASREESWESGRSERGPPDWRL) and 361–371 (RRSEEKEAGEI). Phosphoserine occurs at positions 332, 336, and 363.

The protein belongs to the Luc7 family. Ubiquitous.

In terms of biological role, may bind to RNA via its Arg/Ser-rich domain. The protein is Putative RNA-binding protein Luc7-like 1 (LUC7L) of Homo sapiens (Human).